A 172-amino-acid polypeptide reads, in one-letter code: B-box zinc finger protein 18 (172 aa).

The Zn(2+) site is built by cysteine 5, cysteine 8, cysteine 28, histidine 33, cysteine 56, cysteine 59, cysteine 79, and histidine 84. A B box-type 1; atypical zinc finger spans residues 5–47; that stretch reads CDACESAAAIVFCAADEAALCCSCDEKVHKCNKLASRHLRVGL. A B box-type 2; atypical zinc finger spans residues 56 to 96; that stretch reads CDICENAPAFFYCEIDGSSLCLQCDMVVHVGGKRTHRRFLL. Residues 119-172 are disordered; sequence QKASSGRGQESNGNGDHDHNMIDLNSNPQRVHEPGSHNQEEGIDVNNANNHEHE. The span at 120-132 shows a compositional bias: polar residues; it reads KASSGRGQESNGN. Residues 148-158 show a composition bias toward basic and acidic residues; that stretch reads RVHEPGSHNQE.

Expressed in vasculature of leaves and petioles.

The protein resides in the nucleus. Functionally, acts as a negative regulator of seedling photomorphogenesis. Acts as a negative regulator of blue light-mediated inhibition of hypocotyl elongation through increase of bioactive gibberellin levels. Acts as a repressor of thermotolerance by modulating expression of a set of heat shock-responsive genes. The sequence is that of B-box zinc finger protein 18 from Arabidopsis thaliana (Mouse-ear cress).